The following is a 362-amino-acid chain: Peptide chain release factor 1 (362 aa).

Glutamine 237 is modified (N5-methylglutamine).

It belongs to the prokaryotic/mitochondrial release factor family. Post-translationally, methylated by PrmC. Methylation increases the termination efficiency of RF1.

It localises to the cytoplasm. Functionally, peptide chain release factor 1 directs the termination of translation in response to the peptide chain termination codons UAG and UAA. The protein is Peptide chain release factor 1 (prfA) of Aquifex aeolicus (strain VF5).